Reading from the N-terminus, the 339-residue chain is 4-hydroxy-2-oxovalerate aldolase (339 aa).

In terms of domain architecture, Pyruvate carboxyltransferase spans 8 to 260; it reads IILHDMCLRD…STDVDVFKLM (253 aa). Residue 16–17 coordinates substrate; it reads RD. D17 serves as a coordination point for Mn(2+). The active-site Proton acceptor is H20. Positions 170 and 199 each coordinate substrate. Mn(2+) is bound by residues H199 and H201. Residue Y290 participates in substrate binding.

It belongs to the 4-hydroxy-2-oxovalerate aldolase family.

It catalyses the reaction (S)-4-hydroxy-2-oxopentanoate = acetaldehyde + pyruvate. The sequence is that of 4-hydroxy-2-oxovalerate aldolase from Shewanella woodyi (strain ATCC 51908 / MS32).